A 504-amino-acid polypeptide reads, in one-letter code: Arabinose import ATP-binding protein AraG (504 aa).

ABC transporter domains follow at residues 8 to 243 (LSFR…MVGR) and 256 to 499 (YGEE…MPKV). An ATP-binding site is contributed by 40 to 47 (GENGAGKS).

Belongs to the ABC transporter superfamily. Arabinose importer (TC 3.A.1.2.2) family. In terms of assembly, the complex is composed of two ATP-binding proteins (AraG), two transmembrane proteins (AraH) and a solute-binding protein (AraF).

Its subcellular location is the cell inner membrane. It catalyses the reaction L-arabinose(out) + ATP + H2O = L-arabinose(in) + ADP + phosphate + H(+). Its function is as follows. Part of the ABC transporter complex AraFGH involved in arabinose import. Responsible for energy coupling to the transport system. This Escherichia coli (strain UTI89 / UPEC) protein is Arabinose import ATP-binding protein AraG.